A 547-amino-acid chain; its full sequence is Protein RBL (547 aa).

WD repeat units lie at residues 21-60 (LEHGVIKCVAFNHRGSLLAAGCADGGCVIWDFETRGIAKE), 65-104 (DCSAAITSVSWSKYGHRLLVSAADKSLTLWDVSTGEKIAR), 214-253 (SGAAPVKNIVFSRNGQYLLTNSHDRTIRIYENLLPAKNVL), 285-332 (EFQD…VKIL), and 334-373 (GPKEALIDLAWHPVHPIIVSVSLAGLVYIWAKDYTENWSA). Residues 466 to 547 (SPASEEAGQN…GGDDDDDAYY (82 aa)) are disordered. Positions 499–511 (SEKAMELQAEKAK) are enriched in basic and acidic residues. Positions 530-547 (QETDDSINGGDDDDDAYY) are enriched in acidic residues.

As to quaternary structure, part of a complex composed of TRO, RBL and WDR5A. Interacts with TRO and WDR5A, but not with WDR5B. This complex is formed during both vegetative and reproductive development. In terms of tissue distribution, strongly expressed in root tips, shoot apices, vascular tissues, developing embryos and endosperms.

The protein resides in the nucleus. Its function is as follows. Promotes the expression of FLC and FLC homologs to repress the floral transition. Promotes WRKY70 and LTP7 genes epigenetic methylation (e.g. H3K4me3) and subsequent expression. The protein is Protein RBL of Arabidopsis thaliana (Mouse-ear cress).